The chain runs to 566 residues: MTANVNVLVLPTHMRENDSAAIIIPSTRSAPQKEVSYKHLVAITDSLHRDLAHLGITKACKVAIVLPNGLEFVAVFLSVLRQRAVAAPLDAQLTESEFKDIFSRMKPELVIMLPIPPESSGGPCLPAPAMRAALGLTLRVALCRRTSDVKDGSGLGLQLALDLLEPAHSNHPAVAIVPKASAYSRDDVWSEDGALMLFTSGTTGAPKSVVLSHINLLVAMRIIIANHQLSSMDRTIIITPLHHIIGVCGSLLVTLFSGACAVIPDSLPGAFWQYCTEFGVTWFHAVPTLHRLLLKFPRTKDSMPPRLRFLRSGGSEMAPDLYETLKAFGVPVLEVYGMTETGPAIFCNHLDENGAGARQRSHYPIPDAVDVMILVSSDQPEGETYDKTSLQADQYSNLKMTKEPGVIGEVCVRGKNVMAGYINNSRANTEAFLPNGYFRTGDLGTIQSSGQLKLVGRLKEVINKGGIKIGPSEVEHAALSHESVSEAVCFRIADVMYGEEIGLAVKLRSNSGKNQCTDRDLKQHIRYQLSAFKVPKEIVFVDAVHYNRTGKPLRTQVSQKFAEGLL.

AMP is bound at residue 196–207; sequence MLFTSGTTGAPK. The segment at 473-551 is AMP-binding; it reads EVEHAALSHE…DAVHYNRTGK (79 aa).

The protein belongs to the ATP-dependent AMP-binding enzyme family.

It functions in the pathway mycotoxin biosynthesis. In terms of biological role, acyl-CoA synthetase; part of the gene cluster that mediates the biosynthesis of the host-selective toxins (HSTs) AAL-toxins, sphinganine-analog mycotoxins responsible for Alternaria stem canker on tomato by the tomato pathotype. The biosynthesis starts with the polyketide synthase ALT1-catalyzed C-16 carbon chain assembly from one starter acetyl-CoA unit with malonyl-CoA extender units. ALT1 also selectively transfers methyl groups at the first and the third cycle of chain elongation for AAL toxin. The C-16 polyketide chain is released from the enzyme by a nucleophilic attack of a carbanion, which is derived from R-carbon of glycin by decarboxylation, on the carbonyl carbon of polyketide acyl chain. This step is probably catalyzed by a pyridoxal 5'-phosphate-dependent aminoacyl transferase ALT4. The respective functions of the other enzymes encoded by the cluster have still to be elucidated. The sphingosine N-acyltransferase-like protein ALT7 seems not to act as a resistance/self-tolerance factor against the toxin in the toxin biosynthetic gene cluster, contrary to what is expected. The protein is Acyl-CoA synthetase ALT10 of Alternaria alternata (Alternaria rot fungus).